Reading from the N-terminus, the 574-residue chain is Proline--tRNA ligase (574 aa).

This sequence belongs to the class-II aminoacyl-tRNA synthetase family. ProS type 1 subfamily. In terms of assembly, homodimer.

It localises to the cytoplasm. It carries out the reaction tRNA(Pro) + L-proline + ATP = L-prolyl-tRNA(Pro) + AMP + diphosphate. Its function is as follows. Catalyzes the attachment of proline to tRNA(Pro) in a two-step reaction: proline is first activated by ATP to form Pro-AMP and then transferred to the acceptor end of tRNA(Pro). As ProRS can inadvertently accommodate and process non-cognate amino acids such as alanine and cysteine, to avoid such errors it has two additional distinct editing activities against alanine. One activity is designated as 'pretransfer' editing and involves the tRNA(Pro)-independent hydrolysis of activated Ala-AMP. The other activity is designated 'posttransfer' editing and involves deacylation of mischarged Ala-tRNA(Pro). The misacylated Cys-tRNA(Pro) is not edited by ProRS. In Anaeromyxobacter sp. (strain K), this protein is Proline--tRNA ligase.